Reading from the N-terminus, the 396-residue chain is Elongation factor Tu (396 aa).

The tr-type G domain maps to 10–206 (KPHVNVGTIG…ALDTYIPTPE (197 aa)). The G1 stretch occupies residues 19–26 (GHVDHGKT). 19–26 (GHVDHGKT) provides a ligand contact to GTP. T26 is a Mg(2+) binding site. Residues 60-64 (GITIN) are G2. The interval 81–84 (DCPG) is G3. GTP contacts are provided by residues 81–85 (DCPGH) and 136–139 (NKAD). Positions 136-139 (NKAD) are G4. The G5 stretch occupies residues 174–176 (SAK).

This sequence belongs to the TRAFAC class translation factor GTPase superfamily. Classic translation factor GTPase family. EF-Tu/EF-1A subfamily. In terms of assembly, monomer.

The protein localises to the cytoplasm. The catalysed reaction is GTP + H2O = GDP + phosphate + H(+). In terms of biological role, GTP hydrolase that promotes the GTP-dependent binding of aminoacyl-tRNA to the A-site of ribosomes during protein biosynthesis. The sequence is that of Elongation factor Tu from Bordetella bronchiseptica (strain ATCC BAA-588 / NCTC 13252 / RB50) (Alcaligenes bronchisepticus).